We begin with the raw amino-acid sequence, 66 residues long: Large ribosomal subunit protein bL35 (66 aa).

A compositionally biased stretch (basic residues) spans 1 to 16 (MPKQKTHRASAKRFKR). Residues 1–20 (MPKQKTHRASAKRFKRTGSG) form a disordered region.

It belongs to the bacterial ribosomal protein bL35 family.

In Streptococcus thermophilus (strain CNRZ 1066), this protein is Large ribosomal subunit protein bL35.